Here is a 382-residue protein sequence, read N- to C-terminus: uncharacterized protein (382 aa).

Transmembrane regions (helical) follow at residues 14 to 34, 45 to 65, 79 to 99, 102 to 122, 131 to 151, 157 to 177, 204 to 224, 235 to 255, 270 to 290, 291 to 311, 325 to 345, and 348 to 368; these read GLLLLTLAIAVLNTLVPLWLA, VVSSSYFTGNLVGTLLTGYVI, FIFAAGCAGLGLMIGFWSWLA, FVAGVGCAMIWVVVESALMCS, LLAAYMMVYYVGTFLGQLLVS, LMSVLPWVTGLTLAGILPLLF, LGVNGCIISGIVLGSLYGLMP, ASIGFWMAVLVSAGILGQWPI, VQVFVVILGSIAMLSQAAMAP, ALFILGAAGFTLYPVAMAWAC, ALLLSYTVGSLLGPSFTAMLM, and FSDNLLFIMIASVSFIYLLML.

The protein belongs to the major facilitator superfamily. YcaD (TC 2.A.1.26) family.

Its subcellular location is the cell inner membrane. This is an uncharacterized protein from Escherichia coli (strain K12 / MC4100 / BW2952).